The sequence spans 440 residues: Chromosomal replication initiator protein DnaA (440 aa).

Positions 1-69 are domain I, interacts with DnaA modulators; sequence MKERILQEIK…VKVVLGNDAT (69 aa). Residues 69–96 are domain II; that stretch reads TFEITYEAFEPHSSYSEPLVKKRAVLLT. The tract at residues 97 to 313 is domain III, AAA+ region; it reads PLNPDYTFEN…GAIIKLLVYK (217 aa). Residues V108, N113, G140, L141, G142, K143, T144, H145, and R300 each contribute to the ADP site. An ATP-binding site is contributed by G140. G142, K143, and T144 together coordinate ATP. Mg(2+) is bound at residue T144. The domain IV, binds dsDNA stretch occupies residues 314 to 440; that stretch reads ETTGKEVDLK…GEISRRALSG (127 aa).

This sequence belongs to the DnaA family. Oligomerizes as a right-handed, spiral filament on DNA at oriC.

The protein resides in the cytoplasm. Plays an essential role in the initiation and regulation of chromosomal replication. ATP-DnaA binds to the origin of replication (oriC) to initiate formation of the DNA replication initiation complex once per cell cycle. Binds the DnaA box (a 9 base pair repeat at the origin) and separates the double-stranded (ds)DNA. Forms a right-handed helical filament on oriC DNA; dsDNA binds to the exterior of the filament while single-stranded (ss)DNA is stabiized in the filament's interior. The ATP-DnaA-oriC complex binds and stabilizes one strand of the AT-rich DNA unwinding element (DUE), permitting loading of DNA polymerase. After initiation quickly degrades to an ADP-DnaA complex that is not apt for DNA replication. Binds acidic phospholipids. In terms of biological role, the DnaA box consensus is 5'-[ATC][AT]AC[CT]TACCA[CT][CTA]-3' in this bacterium. Mutagenesis of residues that line the central pore blocks dsDNA separation. The polypeptide is Chromosomal replication initiator protein DnaA (Thermotoga maritima (strain ATCC 43589 / DSM 3109 / JCM 10099 / NBRC 100826 / MSB8)).